Consider the following 72-residue polypeptide: Translation initiation factor IF-1 (72 aa).

The S1-like domain maps to 1 to 72; that stretch reads MAKDDVIEVE…TRGRITYRYK (72 aa). Y60 is modified (phosphotyrosine).

It belongs to the IF-1 family. In terms of assembly, component of the 30S ribosomal translation pre-initiation complex which assembles on the 30S ribosome in the order IF-2 and IF-3, IF-1 and N-formylmethionyl-tRNA(fMet); mRNA recruitment can occur at any time during PIC assembly.

It localises to the cytoplasm. Its function is as follows. One of the essential components for the initiation of protein synthesis. Stabilizes the binding of IF-2 and IF-3 on the 30S subunit to which N-formylmethionyl-tRNA(fMet) subsequently binds. Helps modulate mRNA selection, yielding the 30S pre-initiation complex (PIC). Upon addition of the 50S ribosomal subunit IF-1, IF-2 and IF-3 are released leaving the mature 70S translation initiation complex. This chain is Translation initiation factor IF-1, found in Oceanobacillus iheyensis (strain DSM 14371 / CIP 107618 / JCM 11309 / KCTC 3954 / HTE831).